The primary structure comprises 134 residues: Small ribosomal subunit protein uS8 (134 aa).

It belongs to the universal ribosomal protein uS8 family. Part of the 30S ribosomal subunit. Contacts proteins S5 and S12.

Functionally, one of the primary rRNA binding proteins, it binds directly to 16S rRNA central domain where it helps coordinate assembly of the platform of the 30S subunit. The chain is Small ribosomal subunit protein uS8 from Thermotoga maritima (strain ATCC 43589 / DSM 3109 / JCM 10099 / NBRC 100826 / MSB8).